The primary structure comprises 265 residues: R-spondin-1 (265 aa).

Positions 1–20 are cleaved as a signal peptide; it reads MRLGLCVVALVLSWTHIAVG. 2 FU repeats span residues 34–85 and 91–135; these read AEGS…GYFD and MNKC…GSTA. 11 disulfides stabilise this stretch: Cys40–Cys47, Cys44–Cys53, Cys56–Cys75, Cys79–Cys94, Cys97–Cys105, Cys102–Cys111, Cys114–Cys125, Cys129–Cys142, Cys148–Cys190, Cys159–Cys166, and Cys199–Cys206. Residue Asn137 is glycosylated (N-linked (GlcNAc...) asparagine). Residues 147 to 207 form the TSP type-1 domain; that stretch reads QCEMSEWSPW…KCTVRRTPCP (61 aa). C-linked (Man) tryptophan glycosylation occurs at Trp153. A glycan (C-linked (Man) tryptophan; by DPY19L3) is linked at Trp156. 2 disordered regions span residues 173–192 and 201–265; these read EERT…TCSD and VRRT…TWAQ. Residues 245-257 show a composition bias toward low complexity; it reads QQQPQPGTTGPLT.

The protein belongs to the R-spondin family. As to quaternary structure, interacts with ZNRF3; promoting indirect interaction between ZNRF3 and LGR4 and membrane clearance of ZNRF3. Identified in a complex composed of RNF43, LGR5 and RSPO1. Interacts with the extracellular domain of FZD8 and LRP6. It however does not form a ternary complex with FZD8 and LRP6. Interacts with WNT1. Binds heparin. Interacts with LGR4, LGR5 and LGR6. Interacts (via FU repeats) with KREM1. C-, and N-glycosylated. N-glycosylation at Asn-137, negatively influences its secretion and enhancing effect on Wnt/beta-catenin signaling. C-mannosylation at Trp-156 by DPY19L3 is required for its secretion an regulates the enhancing activity of Wnt signaling. Expressed in the dorsal part of the neural tube on 10 and 12 dpc, especially in the boundary region between roof plate and neuroepithelium. This expression is enhanced in the rostral part. Also expressed in other tissues such as truncal region neighboring forelimbs and mesenchymal tissues around the nasal cavity.

Its subcellular location is the secreted. The protein resides in the nucleus. Functionally, activator of the canonical Wnt signaling pathway by acting as a ligand for LGR4-6 receptors. Upon binding to LGR4-6 (LGR4, LGR5 or LGR6), LGR4-6 associate with phosphorylated LRP6 and frizzled receptors that are activated by extracellular Wnt receptors, triggering the canonical Wnt signaling pathway to increase expression of target genes. Also regulates the canonical Wnt/beta-catenin-dependent pathway and non-canonical Wnt signaling by acting as an inhibitor of ZNRF3, an important regulator of the Wnt signaling pathway. Acts as a ligand for frizzled FZD8 and LRP6. May negatively regulate the TGF-beta pathway. Has a essential roles in ovary determination. Regulates Wnt signaling by antagonizing DKK1/KREM1-mediated internalization of LRP6 through an interaction with KREM1. This Mus musculus (Mouse) protein is R-spondin-1 (Rspo1).